The sequence spans 305 residues: UDP-3-O-acyl-N-acetylglucosamine deacetylase (305 aa).

Zn(2+)-binding residues include H78, H237, and D241. H264 (proton donor) is an active-site residue.

This sequence belongs to the LpxC family. Zn(2+) is required as a cofactor.

The catalysed reaction is a UDP-3-O-[(3R)-3-hydroxyacyl]-N-acetyl-alpha-D-glucosamine + H2O = a UDP-3-O-[(3R)-3-hydroxyacyl]-alpha-D-glucosamine + acetate. Its pathway is glycolipid biosynthesis; lipid IV(A) biosynthesis; lipid IV(A) from (3R)-3-hydroxytetradecanoyl-[acyl-carrier-protein] and UDP-N-acetyl-alpha-D-glucosamine: step 2/6. In terms of biological role, catalyzes the hydrolysis of UDP-3-O-myristoyl-N-acetylglucosamine to form UDP-3-O-myristoylglucosamine and acetate, the committed step in lipid A biosynthesis. This Cupriavidus taiwanensis (strain DSM 17343 / BCRC 17206 / CCUG 44338 / CIP 107171 / LMG 19424 / R1) (Ralstonia taiwanensis (strain LMG 19424)) protein is UDP-3-O-acyl-N-acetylglucosamine deacetylase.